A 378-amino-acid polypeptide reads, in one-letter code: Ribosomal RNA large subunit methyltransferase G (378 aa).

It belongs to the methyltransferase superfamily. RlmG family.

It is found in the cytoplasm. The catalysed reaction is guanosine(1835) in 23S rRNA + S-adenosyl-L-methionine = N(2)-methylguanosine(1835) in 23S rRNA + S-adenosyl-L-homocysteine + H(+). In terms of biological role, specifically methylates the guanine in position 1835 (m2G1835) of 23S rRNA. This chain is Ribosomal RNA large subunit methyltransferase G, found in Shigella boydii serotype 4 (strain Sb227).